A 215-amino-acid chain; its full sequence is Oligoribonuclease (215 aa).

An Exonuclease domain is found at 5 to 170 (LVWIDCEMTG…ADIHESIREL (166 aa)). Y127 is an active-site residue.

Belongs to the oligoribonuclease family.

It localises to the cytoplasm. Functionally, 3'-to-5' exoribonuclease specific for small oligoribonucleotides. This is Oligoribonuclease from Mycobacterium ulcerans (strain Agy99).